A 314-amino-acid chain; its full sequence is MSQALRIVFAGTPEFAAEHLKALLDTPHRIVAVYTQPDRPAGRGQKLMPSAVKNLALEHGLPVMQPQSLRNAEAQAELAALRADLMVVVAYGLILPQAVLDIPRLGCINSHASLLPRWRGAAPIQRAVEAGDAESGVTVMQMEAGLDTGPMLLKVSTPISAADTGGSLHDRLAALGPKAVIEAIAGLAAGTLHGEIQDDALATYAHKLNKDEARLDWSRPAVELERQVRAFTPWPVCHTSLADAPLKVLGASLGQGSGAPGTILEASRDGLLVACGEGALRLTRLQLPGGKPLAFADLYNSRREQFAAGQVLGQ.

Residue 113–116 (SLLP) participates in (6S)-5,6,7,8-tetrahydrofolate binding.

The protein belongs to the Fmt family.

It catalyses the reaction L-methionyl-tRNA(fMet) + (6R)-10-formyltetrahydrofolate = N-formyl-L-methionyl-tRNA(fMet) + (6S)-5,6,7,8-tetrahydrofolate + H(+). In terms of biological role, attaches a formyl group to the free amino group of methionyl-tRNA(fMet). The formyl group appears to play a dual role in the initiator identity of N-formylmethionyl-tRNA by promoting its recognition by IF2 and preventing the misappropriation of this tRNA by the elongation apparatus. The protein is Methionyl-tRNA formyltransferase of Pseudomonas aeruginosa (strain LESB58).